A 926-amino-acid chain; its full sequence is Protein translocase subunit SecA (926 aa).

Residues glutamine 87, 105-109 (GEGKT), and aspartate 512 contribute to the ATP site. The Zn(2+) site is built by cysteine 911, cysteine 913, cysteine 922, and histidine 923.

It belongs to the SecA family. In terms of assembly, monomer and homodimer. Part of the essential Sec protein translocation apparatus which comprises SecA, SecYEG and auxiliary proteins SecDF-YajC and YidC. Zn(2+) is required as a cofactor.

The protein localises to the cell inner membrane. It localises to the cytoplasm. It catalyses the reaction ATP + H2O + cellular proteinSide 1 = ADP + phosphate + cellular proteinSide 2.. In terms of biological role, part of the Sec protein translocase complex. Interacts with the SecYEG preprotein conducting channel. Has a central role in coupling the hydrolysis of ATP to the transfer of proteins into and across the cell membrane, serving both as a receptor for the preprotein-SecB complex and as an ATP-driven molecular motor driving the stepwise translocation of polypeptide chains across the membrane. This is Protein translocase subunit SecA from Psychrobacter cryohalolentis (strain ATCC BAA-1226 / DSM 17306 / VKM B-2378 / K5).